The following is a 454-amino-acid chain: C4-dicarboxylate transport protein (454 aa).

9 helical membrane-spanning segments follow: residues 33–53 (VQVL…PDIG), 66–86 (LVKM…IAGM), 101–121 (IYFL…ANLV), 148–168 (EQSI…GAFA), 170–190 (GDIL…AIVG), 210–230 (LVAI…AFTI), 243–263 (MLIG…LGAV), 354–374 (LLLV…AGFI), and 377–397 (AATL…ILGI).

Belongs to the dicarboxylate/amino acid:cation symporter (DAACS) (TC 2.A.23) family.

The protein resides in the cell inner membrane. Its function is as follows. Responsible for the transport of dicarboxylates such as succinate, fumarate, and malate from the periplasm across the membrane. This Sinorhizobium medicae (strain WSM419) (Ensifer medicae) protein is C4-dicarboxylate transport protein.